We begin with the raw amino-acid sequence, 722 residues long: Polyribonucleotide nucleotidyltransferase (722 aa).

Mg(2+) contacts are provided by Asp487 and Asp493. The KH domain occupies 554–613 (PRIETFKIPTDKIREVIGTGGKVIREIVEKTGAKVNIEDDGTVKVASSDGESIKAAIKWI). One can recognise an S1 motif domain in the interval 623-691 (GEIYEGTVVK…DRGKTRLSMK (69 aa)). Positions 691–722 (KVVDQDTGEDLEAKQKAEAKAEDEAPAQAAGE) are disordered. Residues 701-713 (LEAKQKAEAKAED) are compositionally biased toward basic and acidic residues.

It belongs to the polyribonucleotide nucleotidyltransferase family. Requires Mg(2+) as cofactor.

Its subcellular location is the cytoplasm. It catalyses the reaction RNA(n+1) + phosphate = RNA(n) + a ribonucleoside 5'-diphosphate. Its function is as follows. Involved in mRNA degradation. Catalyzes the phosphorolysis of single-stranded polyribonucleotides processively in the 3'- to 5'-direction. In Rhodopseudomonas palustris (strain BisB5), this protein is Polyribonucleotide nucleotidyltransferase.